We begin with the raw amino-acid sequence, 303 residues long: Taste receptor type 2 member 2 (303 aa).

The Extracellular segment spans residues 1-10 (MALSFSAILH). A helical membrane pass occupies residues 11–31 (IIMMSAEFFTGITVNGFLIIV). Topologically, residues 32 to 56 (NCNELIKHRKLMPIQILLMCIGMSR) are cytoplasmic. Residues 57–77 (FGLQMVLMVQSFFSVFFPLLY) form a helical membrane-spanning segment. At 78 to 79 (VK) the chain is on the extracellular side. A helical membrane pass occupies residues 80-100 (IIYGAAMMFLWMFFSSISLWF). Over 101-102 (AT) the chain is Cytoplasmic. The chain crosses the membrane as a helical span at residues 103 to 123 (CLSVFYCLKISGFTQSCFLWL). Topologically, residues 124 to 129 (KFRIPK) are extracellular. A helical transmembrane segment spans residues 130–150 (LIPWLLLGSVLASVSIASVCI). Residues 151 to 185 (EVDYAKNVEEDALRNTTLKKSKTKIKKISEVLLVN) lie on the Cytoplasmic side of the membrane. The chain crosses the membrane as a helical span at residues 186-206 (LALIFPLAIFVMCTSMLLISL). The Extracellular portion of the chain corresponds to 207–234 (YKHTHRMQHGSHGFRNANTEAHINALKT). A helical membrane pass occupies residues 235 to 255 (VITFFCFFISYFAAFMTNMTF). The Cytoplasmic portion of the chain corresponds to 256 to 277 (SLPYRSHQFFMLKDIMAAYPSG).

The protein belongs to the G-protein coupled receptor T2R family.

The protein localises to the cell membrane. Bitter taste receptor that detects natural and synthetic bitter compounds. This is Taste receptor type 2 member 2 from Homo sapiens (Human).